We begin with the raw amino-acid sequence, 353 residues long: sn-glycerol-3-phosphate import ATP-binding protein UgpC (353 aa).

Positions 4 to 234 (ILLNDVRKSY…PASEFVAGFI (231 aa)) constitute an ABC transporter domain. 36 to 43 (GPSGCGKS) lines the ATP pocket.

It belongs to the ABC transporter superfamily. sn-glycerol-3-phosphate importer (TC 3.A.1.1.3) family. In terms of assembly, the complex is composed of two ATP-binding proteins (UgpC), two transmembrane proteins (UgpA and UgpE) and a solute-binding protein (UgpB).

The protein localises to the cell inner membrane. It catalyses the reaction sn-glycerol 3-phosphate(out) + ATP + H2O = sn-glycerol 3-phosphate(in) + ADP + phosphate + H(+). Functionally, part of the ABC transporter complex UgpBAEC involved in sn-glycerol-3-phosphate (G3P) import. Responsible for energy coupling to the transport system. This Paracoccus denitrificans (strain Pd 1222) protein is sn-glycerol-3-phosphate import ATP-binding protein UgpC.